Consider the following 311-residue polypeptide: MKNYNLSDNINRSNILTEESNHLSKNIDTVSTSKLVDIFVEEDKKPQQAISQAKHQITKSIDLIYQRLIDNGRLFYIGAGTSGRIAVLDAVECPPTFCTSPELVQAVIAGGSSSLINSSEEKEDSNSLSIKDLKERNFSSKDCLIGITAGGTTPYVLSGLNYARNIGALNIAITSVPEQQASFGSNITIRLITGPEIIAGSTRLKAGTATKMALNIISSGVMIKLGKVFDNKMIDVSISNKKLFDRALRITSSLLNIEMKEAQLLLDQAKGSIKVACIIKSSGMDQKSAFALLERNNHNLRKALKDINIEF.

The SIS domain maps to 64-227 (IYQRLIDNGR…SSGVMIKLGK (164 aa)). The active-site Proton donor is glutamate 92. Glutamate 123 is an active-site residue.

It belongs to the GCKR-like family. MurNAc-6-P etherase subfamily. In terms of assembly, homodimer.

It catalyses the reaction N-acetyl-D-muramate 6-phosphate + H2O = N-acetyl-D-glucosamine 6-phosphate + (R)-lactate. It participates in amino-sugar metabolism; N-acetylmuramate degradation. In terms of biological role, specifically catalyzes the cleavage of the D-lactyl ether substituent of MurNAc 6-phosphate, producing GlcNAc 6-phosphate and D-lactate. This Prochlorococcus marinus (strain SARG / CCMP1375 / SS120) protein is N-acetylmuramic acid 6-phosphate etherase.